Reading from the N-terminus, the 89-residue chain is Small ribosomal subunit protein uS15 (89 aa).

Belongs to the universal ribosomal protein uS15 family. As to quaternary structure, part of the 30S ribosomal subunit. Forms a bridge to the 50S subunit in the 70S ribosome, contacting the 23S rRNA.

In terms of biological role, one of the primary rRNA binding proteins, it binds directly to 16S rRNA where it helps nucleate assembly of the platform of the 30S subunit by binding and bridging several RNA helices of the 16S rRNA. Its function is as follows. Forms an intersubunit bridge (bridge B4) with the 23S rRNA of the 50S subunit in the ribosome. The sequence is that of Small ribosomal subunit protein uS15 from Syntrophomonas wolfei subsp. wolfei (strain DSM 2245B / Goettingen).